The chain runs to 308 residues: Phenylcoumaran benzylic ether reductase PT1 (308 aa).

Residues G11 to G17, R36, and K46 each bind NADP(+). Residue K134 is the Proton acceptor of the active site. Residue R138 coordinates NADP(+).

This sequence belongs to the NmrA-type oxidoreductase family. Isoflavone reductase subfamily.

It carries out the reaction (-)-dehydrodiconiferyl alcohol + NADPH + H(+) = (S)-isodihydrodehydrodiconiferyl alcohol + NADP(+). The enzyme catalyses (+)-dehydrodiconiferyl alcohol + NADPH + H(+) = (R)-isodihydrodehydrodiconiferyl alcohol + NADP(+). The catalysed reaction is (2R,3S)-dihydrodehydrodiconiferyl alcohol + NADPH + H(+) = (S)-tetrahydrodehydrodiconiferyl alcohol + NADP(+). It catalyses the reaction (2S,3R)-dihydrodehydrodiconiferyl alcohol + NADPH + H(+) = (R)-tetrahydrodehydrodiconiferyl alcohol + NADP(+). Its function is as follows. Oxidoreductase involved in lignan biosynthesis. Catalyzes the NADPH-dependent reduction of phenylcoumaran benzylic ethers. Converts dehydrodiconiferyl alcohol (DDC) to isodihydrodehydrodiconiferyl alcohol (IDDDC), and dihydrodehydrodiconiferyl alcohol (DDDC) to tetrahydrodehydrodiconiferyl alcohol (TDDC). The chain is Phenylcoumaran benzylic ether reductase PT1 from Pinus taeda (Loblolly pine).